Here is a 400-residue protein sequence, read N- to C-terminus: Acetate kinase (400 aa).

Position 10 (N10) interacts with Mg(2+). K17 is a binding site for ATP. R91 contributes to the substrate binding site. The active-site Proton donor/acceptor is D150. ATP is bound by residues 210-214 (HLGGG), 285-287 (DFR), and 333-337 (GIGEN). E387 is a binding site for Mg(2+).

The protein belongs to the acetokinase family. In terms of assembly, homodimer. Mg(2+) is required as a cofactor. Mn(2+) serves as cofactor.

The protein localises to the cytoplasm. The enzyme catalyses acetate + ATP = acetyl phosphate + ADP. Its pathway is metabolic intermediate biosynthesis; acetyl-CoA biosynthesis; acetyl-CoA from acetate: step 1/2. Its function is as follows. Catalyzes the formation of acetyl phosphate from acetate and ATP. Can also catalyze the reverse reaction. In Buchnera aphidicola subsp. Baizongia pistaciae (strain Bp), this protein is Acetate kinase.